The following is a 162-amino-acid chain: Interleukin-15 (162 aa).

An N-terminal signal peptide occupies residues 1–29 (MRISKPHLRITSIQCYVCLLLNTHFLTEA). Positions 30 to 48 (GIRVFILGCISAGIPKTEA) are excised as a propeptide. 2 disulfides stabilise this stretch: Cys83-Cys133 and Cys90-Cys136. N-linked (GlcNAc...) asparagine glycosylation is found at Asn119, Asn127, and Asn143.

This sequence belongs to the IL-15/IL-21 family.

Its subcellular location is the secreted. In terms of biological role, cytokine that plays a major role in the development of inflammatory and protective immune responses to microbial invaders and parasites by modulating immune cells of both the innate and adaptive immune systems. Stimulates the proliferation of natural killer cells, T-cells and B-cells and promotes the secretion of several cytokines. In monocytes, induces the production of IL8 and monocyte chemotactic protein 1/CCL2, two chemokines that attract neutrophils and monocytes respectively to sites of infection. Unlike most cytokines, which are secreted in soluble form, IL15 is expressed in association with its high affinity IL15RA on the surface of IL15-producing cells and delivers signals to target cells that express IL2RB and IL2RG receptor subunits. Binding to its receptor triggers the phosphorylation of JAK1 and JAK3 and the recruitment and subsequent phosphorylation of signal transducer and activator of transcription-3/STAT3 and STAT5. In mast cells, induces the rapid tyrosine phosphorylation of STAT6 and thereby controls mast cell survival and release of cytokines such as IL4. This is Interleukin-15 (IL15) from Marmota himalayana (Himalayan marmot).